Consider the following 68-residue polypeptide: Large ribosomal subunit protein uL29 (68 aa).

Belongs to the universal ribosomal protein uL29 family.

This chain is Large ribosomal subunit protein uL29, found in Acidiphilium cryptum (strain JF-5).